A 301-amino-acid chain; its full sequence is 2-(hydroxymethyl)glutarate dehydrogenase (301 aa).

Residues 8–22 and Ser99 contribute to the NAD(+) site; that span reads GFIG…MAIN. Lys174 is an active-site residue. Lys243 is a binding site for NAD(+).

Belongs to the HIBADH-related family. Homotetramer.

It carries out the reaction (S)-2-hydroxymethylglutarate + NAD(+) = 2-formylglutarate + NADH + H(+). The protein operates within cofactor degradation; nicotinate degradation; propanoate and pyruvate from 6-hydroxynicotinate: step 3/8. Functionally, catalyzes the conversion of 2-formylglutarate to (S)-2-hydroxymethylglutarate. Has very low activity with (S)-3-hydroxyisobutyrate. The chain is 2-(hydroxymethyl)glutarate dehydrogenase from Eubacterium barkeri (Clostridium barkeri).